Consider the following 291-residue polypeptide: Translocon-associated protein subunit alpha (291 aa).

Residues 1 to 20 form the signal peptide; the sequence is MRLLPRLLLLLLLVFPATVL. At 21–207 the chain is on the lumenal side; sequence FRGGPRGSLA…EREDGLDGET (187 aa). The tract at residues 34-83 is disordered; the sequence is DLTEDEETVEDSIIEDEDDEAEVEEDEPTDLVEDKEEEDVSGEPEASPSA. A compositionally biased stretch (acidic residues) spans 35–75; the sequence is LTEDEETVEDSIIEDEDDEAEVEEDEPTDLVEDKEEEDVSG. N-linked (GlcNAc...) asparagine glycans are attached at residues N136 and N191. A helical membrane pass occupies residues 208 to 228; the sequence is IFMYMFLAGLGLLVIVGLHQL. Topologically, residues 229–291 are cytoplasmic; the sequence is LESRKRKRPV…AQKRSVGSDE (63 aa). Residue S247 is modified to Phosphoserine. T260 bears the Phosphothreonine mark. Residues 263–291 form a disordered region; that stretch reads QIMQSRRDKASPRRLPRKRAQKRSVGSDE. S273 is modified (phosphoserine). A compositionally biased stretch (basic residues) spans 274–284; the sequence is PRRLPRKRAQK.

Belongs to the TRAP-alpha family. In terms of assembly, heterotetramer of TRAP-alpha, TRAP-beta, TRAP-delta and TRAP-gamma. Interacts with palmitoylated calnexin (CALX), the interaction is required for efficient folding of glycosylated proteins. Post-translationally, phosphorylated in its cytoplasmic tail.

The protein resides in the endoplasmic reticulum membrane. In terms of biological role, TRAP proteins are part of a complex whose function is to bind calcium to the ER membrane and thereby regulate the retention of ER resident proteins. May be involved in the recycling of the translocation apparatus after completion of the translocation process or may function as a membrane-bound chaperone facilitating folding of translocated proteins. This Pongo abelii (Sumatran orangutan) protein is Translocon-associated protein subunit alpha (SSR1).